The following is a 190-amino-acid chain: Peptidyl-tRNA hydrolase (190 aa).

Tyrosine 17 is a tRNA binding site. Histidine 22 functions as the Proton acceptor in the catalytic mechanism. TRNA contacts are provided by tyrosine 67 and asparagine 69.

Belongs to the PTH family. In terms of assembly, monomer.

It localises to the cytoplasm. The catalysed reaction is an N-acyl-L-alpha-aminoacyl-tRNA + H2O = an N-acyl-L-amino acid + a tRNA + H(+). In terms of biological role, hydrolyzes ribosome-free peptidyl-tRNAs (with 1 or more amino acids incorporated), which drop off the ribosome during protein synthesis, or as a result of ribosome stalling. Catalyzes the release of premature peptidyl moieties from peptidyl-tRNA molecules trapped in stalled 50S ribosomal subunits, and thus maintains levels of free tRNAs and 50S ribosomes. The sequence is that of Peptidyl-tRNA hydrolase from Moorella thermoacetica (strain ATCC 39073 / JCM 9320).